The primary structure comprises 264 residues: Transcription initiation factor TFIID subunit 9 (264 aa).

Lys-5 carries the N6-acetyllysine modification. A phosphoserine mark is found at Ser-149, Ser-152, Ser-155, and Ser-158. The segment at 150-174 (VGSVSSRPSTPTLGTPTPQAMSVST) is disordered. The span at 151–174 (GSVSSRPSTPTLGTPTPQAMSVST) shows a compositional bias: polar residues. A phosphothreonine mark is found at Thr-159, Thr-161, Thr-164, and Thr-178. A phosphoserine mark is found at Ser-181 and Ser-196. The tract at residues 233-264 (QNTANESANALKRKREEEDDDDDDDDDDYDNL) is disordered. Residues 249-264 (EEDDDDDDDDDDYDNL) are compositionally biased toward acidic residues.

The protein belongs to the TAF9 family. In terms of assembly, component of the TFIID basal transcription factor complex, composed of TATA-box-binding protein TBP, and a number of TBP-associated factors (TAFs), including TAF1, TAF2, TAF3, TAF4, TAF5, TAF6, TAF7, TAF8, TAF9, TAF10, TAF11, TAF12 and TAF13. Component of the TATA-binding protein-free TAF complex (TFTC), the PCAF histone acetylase complex and the STAGA transcription coactivator-HAT complex. The PCAF complex consists at least of TADA2L/ADA2, SUPT3H/SPT3, TADA3L/ADA3, TAF5L/PAF65-beta, TAF6L/PAF65-alpha, TAF10/TAFII30, TAF12/TAFII20, TAF9/TAFII31 and TRRAP. The STAGA transcription coactivator-HAT complex consists at least of SUPT3H, GCN5L2, SUPT7L, TAF5L, TAF6L, TADA3L, TAD1L, TAF10, TAF12, TRRAP and TAF9. Binds N-terminal domain of p53/TP53 which is essential for transcription. Component of some MLL1/MLL complex, at least composed of the core components KMT2A/MLL1, ASH2L, HCFC1/HCF1, WDR5 and RBBP5, as well as the facultative components BACC1, CHD8, E2F6, HSP70, INO80C, KANSL1, LAS1L, MAX, MCRS1, MGA, MYST1/MOF, PELP1, PHF20, PRP31, RING2, RUVB1/TIP49A, RUVB2/TIP49B, SENP3, TAF1, TAF4, TAF6, TAF7, TAF9 and TEX10. Binds TFIIB and the Herpes simplex virus activator VP16. Forms a heterodimer with TAF6 in a complex with the TAF4B-TAF12 heterodimer. Also interacts with TAF5. Binds directly DNA. Increased DNA binding when complexed with TAF6.

The protein localises to the nucleus. In terms of biological role, the TFIID basal transcription factor complex plays a major role in the initiation of RNA polymerase II (Pol II)-dependent transcription. TFIID recognizes and binds promoters with or without a TATA box via its subunit TBP, a TATA-box-binding protein, and promotes assembly of the pre-initiation complex (PIC). The TFIID complex consists of TBP and TBP-associated factors (TAFs), including TAF1, TAF2, TAF3, TAF4, TAF5, TAF6, TAF7, TAF8, TAF9, TAF10, TAF11, TAF12 and TAF13. TAF9 is also a component of the TBP-free TAFII complex (TFTC), the PCAF histone acetylase complex and the STAGA transcription coactivator-HAT complex. TAF9 and its paralog TAF9B are involved in transcriptional activation as well as repression of distinct but overlapping sets of genes. Essential for cell viability. May have a role in gene regulation associated with apoptosis. The polypeptide is Transcription initiation factor TFIID subunit 9 (Rattus norvegicus (Rat)).